The primary structure comprises 101 residues: MHCDIYRSSKKDEMYLYIARPDYPNDDVEGQDPLENVPEGIRTVFGKPTFVMHLELSQSRKLARVNVLHVLDSLQTKGFFIQMPPEGFINPSDEPEGLRGA.

The 93-residue stretch at 1 to 93 folds into the YcgL domain; sequence MHCDIYRSSK…PPEGFINPSD (93 aa).

This Acinetobacter baylyi (strain ATCC 33305 / BD413 / ADP1) protein is YcgL domain-containing protein ACIAD2309.